The primary structure comprises 333 residues: MITPSSSQSLGMKVQMESEQSPKLQEELDRSPSSVDGSAIRNGTDMQTESPAEATSSPVEVAEDPGANLFPPPLPQPRICMWKYLDIHSMHRLEKAATVEKMREVLAELLELGFPEQSLRDAIILDLFSHALIFCRQQGFSPEQTSAACAMLQDLHKACVATPLGNVEECYRYFTSVLFCHGIRRPPFSIDLFKEEQLLALADYVVNTYFRHFKLYKYVFTPQVRLDLSLTYTGLQPLTLWPEEKENEEMMVVEQVATPQEEEPETVTEPEQQPSEVCILQTYIKSQLSKELRQLQQLVEERLKESEERLSSKLAALEQPFQTPPSKGKTKTK.

The segment covering 1-10 (MITPSSSQSL) has biased composition (polar residues). 2 disordered regions span residues 1–70 (MITP…ANLF) and 309–333 (RLSS…TKTK). Ser34 carries the post-translational modification Phosphoserine. Polar residues predominate over residues 44–58 (TDMQTESPAEATSSP). Positions 284–319 (IKSQLSKELRQLQQLVEERLKESEERLSSKLAALEQ) form a coiled coil.

It localises to the cell projection. The protein resides in the cilium. The protein localises to the flagellum. Its subcellular location is the cytoplasmic vesicle. It is found in the secretory vesicle. It localises to the acrosome. The protein resides in the cytoplasm. The polypeptide is Cilia- and flagella-associated protein 119 (Mus musculus (Mouse)).